A 446-amino-acid polypeptide reads, in one-letter code: Nuclear envelope integral membrane protein 1 (446 aa).

The N-terminal stretch at 1–37 (MAGFMKYKSVSTTIETVRLKLILTAVLFLFPFSQTSG) is a signal peptide. Asn-62, Asn-118, and Asn-129 each carry an N-linked (GlcNAc...) asparagine glycan. 5 helical membrane passes run 154–174 (IYLF…DVLS), 181–201 (YSAG…FIVY), 209–229 (PFYM…QLVF), 239–259 (HWHL…AVCY), and 269–289 (SINI…YAGI). The segment covering 410–431 (LFSTDEEDKEEEEDGWETEDDI) has biased composition (acidic residues). Positions 410-446 (LFSTDEEDKEEEEDGWETEDDIKPEVTSPRMNNTRGK) are disordered. A glycan (N-linked (GlcNAc...) asparagine) is linked at Asn-441.

This sequence belongs to the NEMP family.

The protein resides in the nucleus inner membrane. In terms of biological role, contributes to nuclear envelope stiffness in germ cells. Involved in male and female fertility. Essential for normal erythropoiesis. Required for efficient nuclear envelope opening and enucleation during the late stages of erythroblast maturation. The protein is Nuclear envelope integral membrane protein 1 of Danio rerio (Zebrafish).